The primary structure comprises 545 residues: Prolyl 3-hydroxylase OGFOD1 (545 aa).

The segment at 1–23 (MNGKRPADPGPARPMKKGKKQVS) is disordered. Residues 137–239 (PTIDMSCAKY…RLSISGWFYG (103 aa)) form the Fe2OG dioxygenase domain. Positions 155 and 157 each coordinate Fe cation. Y169 is a 2-oxoglutarate binding site. Residue H218 coordinates Fe cation. 2-oxoglutarate is bound at residue R230. Residues 371–380 (SEDDETEEKG) show a composition bias toward acidic residues. A disordered region spans residues 371–437 (SEDDETEEKG…EAKKESSVPM (67 aa)). Residues 383–393 (ETASAAAGTEE) are compositionally biased toward low complexity. Over residues 402 to 417 (PENNQVAAGSHSQENG) the composition is skewed to polar residues.

It belongs to the TPA1 family. Monomer. Fe(2+) is required as a cofactor. It depends on L-ascorbate as a cofactor.

It is found in the cytoplasm. The protein resides in the nucleus. The enzyme catalyses [ribosomal protein uS12]-L-proline + 2-oxoglutarate + O2 = [ribosomal protein uS12]-(3S)-3-hydroxy-L-proline + succinate + CO2. Functionally, prolyl 3-hydroxylase that catalyzes 3-hydroxylation of 'Pro-62' of small ribosomal subunit uS12 (RPS23), thereby regulating protein translation termination efficiency. Involved in stress granule formation. This chain is Prolyl 3-hydroxylase OGFOD1 (Ogfod1), found in Mus musculus (Mouse).